The sequence spans 809 residues: Lethal factor (809 aa).

The signal sequence occupies residues 1–33 (MNIKKEFIKVISMSCLVTAITLSGPVFIPLVQG). The tract at residues 39 to 66 (DVGMHVKEKEKNKDENKRKDEERNKTQE) is disordered. Basic and acidic residues predominate over residues 40 to 66 (VGMHVKEKEKNKDENKRKDEERNKTQE). The segment at 60–295 (ERNKTQEEHL…NLSLEELKDQ (236 aa)) is i; PA-binding region. An ATLF-like 1 domain is found at 70–282 (KEIMKHIVKI…AFNYMDKFNE (213 aa)). The tract at residues 296–330 (RMLARYEKWEKIKQHYQHWSDSLSEEGRGLLKKLQ) is IIA. Repeat copies occupy residues 315-333 (SDSL…QIPI), 342-357 (HSLS…RIQI), 360-378 (SDFL…QIDI), 380-397 (DSLS…QVDS), and 399-416 (NPLS…KLDI). Positions 315-416 (SDSLSEEGRG…EFLKKLKLDI (102 aa)) are 5 X approximate repeats. An III region spans residues 336–416 (KKDDIIHSLS…EFLKKLKLDI (81 aa)). Residues 420–583 (DINQRLQDTG…EYIRIDAKVV (164 aa)) form an IIB region. Positions 585–809 (KSKIDTKIQE…NDQIKFIINS (225 aa)) are IV. The ATLF-like 2 domain occupies 609–804 (LPKYTKLITF…TFQFINDQIK (196 aa)). H719 contacts Zn(2+). E720 acts as the Proton acceptor in catalysis. The Zn(2+) site is built by H723, Y761, and E768.

Belongs to the peptidase M34 family. As to quaternary structure, interacts (via ATLF domain 1) with the cleaved form of protective antigen (PA-63) anthrax toxin; interaction is required for LF translocation into the host cytoplasm. Interacts with PA-63 homooligomers (either homoheptamers or homooctamers): three molecules of LF bind the PA-63 homoheptamer to form the PA(7)LF(3) complex, in which the relative position of the N-terminal alpha-helices in the three LFs determines which factor is translocated first. Requires Zn(2+) as cofactor.

It localises to the secreted. It is found in the host cytoplasm. The protein localises to the host cytosol. The enzyme catalyses Preferred amino acids around the cleavage site can be denoted BBBBxHx-|-H, in which B denotes Arg or Lys, H denotes a hydrophobic amino acid, and x is any amino acid. The only known protein substrates are mitogen-activated protein (MAP) kinase kinases.. Its activity is regulated as follows. Inhibited by NSC-12155 (1,3-Bis(2-methyl-4-aminoquinoline-6-yl)ure). Inhibited by phenoxyacetic acid bearing alpha-benzyl substituents on the C2-side chain. Inhibited by sulfonamide hydroxamate with benzylic additions at the sulfonamide nitrogen. Also inhibited by sulfonamide hydroxamates with alkylation at the sulfonamide nitrogen. Inhibited by hydroxamic acid inhibitors. Functionally, lethal factor (LF), which constitutes one of the three proteins composing the anthrax toxin, is able to trigger rapid cell death in macrophages. Acts as a protease that cleaves the N-terminal of most dual specificity mitogen-activated protein kinase kinases (MAPKKs or MAP2Ks) (except for MAP2K5): cleavage invariably occurs within the N-terminal proline-rich region preceding the kinase domain, thus disrupting a sequence involved in directing specific protein-protein interactions necessary for the assembly of signaling complexes. Also cleaves mouse Nlrp1b: host Nlrp1b cleavage promotes ubiquitination and degradation of the N-terminal part of Nlrp1b by the proteasome, thereby releasing the cleaved C-terminal part of Nlrp1b, which polymerizes and forms the Nlrp1b inflammasome followed by host cell pyroptosis. Able to cleave mouse Nlrp1b alleles 1 and 5, while it is not able to cleave Nlrp1b alleles 2, 3 and 4. In contrast, does not cleave NLRP1 human ortholog. LF is not toxic by itself and only acts as a lethal factor when associated with protective antigen (PA) to form the lethal toxin (LeTx): PA is required for LF translocation into the host cytosol. The sequence is that of Lethal factor from Bacillus anthracis.